The sequence spans 213 residues: MSSGAGSRRPREPPEHELQRRREQKRRRHDAQQLQQLKHLESFYEKPPPGFIKEDETKPEDCIPDVPGNEHAREFLAHAPTKGLWMPLGREVKVMQCWRCKRYGHRTGDKECPFFIKGNQKLEQFRVAHEDPMYDIIRENKRHEKDVRIQQLKQLLEDSTSDDDGSSSSSSGDREKRKKRKKKEKHKKRKKEKKKKKKRKHKASKSSESSDSE.

A disordered region spans residues 1 to 61 (MSSGAGSRRP…IKEDETKPED (61 aa)). The PIM1-binding stretch occupies residues 1-147 (MSSGAGSRRP…RENKRHEKDV (147 aa)). Basic and acidic residues-rich tracts occupy residues 9–21 (RPREPPEHELQRR) and 52–61 (IKEDETKPED). The CCHC-type zinc finger occupies 96–114 (QCWRCKRYGHRTGDKECPF). A Glycyl lysine isopeptide (Lys-Gly) (interchain with G-Cter in SUMO2) cross-link involves residue Lys121. Residues 154 to 213 (QLLEDSTSDDDGSSSSSSGDREKRKKRKKKEKHKKRKKEKKKKKKRKHKASKSSESSDSE) are disordered. The span at 176 to 204 (KRKKRKKKEKHKKRKKEKKKKKKRKHKAS) shows a compositional bias: basic residues. Ser204 and Ser206 each carry phosphoserine; by PIM1; in vitro.

As to quaternary structure, binds to PIM1. Binds to ZNHIT4. In terms of tissue distribution, highly expressed in the testis, moderately in the kidney, liver and spleen, and weakly in the skeletal muscle and heart.

It is found in the nucleus. Its function is as follows. Is thought to be a target protein for the PIM1 kinase. May play some roles in B-cell proliferation in association with PIM1. The sequence is that of Retinitis pigmentosa 9 protein homolog (rp9) from Mus musculus (Mouse).